Here is a 274-residue protein sequence, read N- to C-terminus: tRNA-cytidine(32) 2-sulfurtransferase (274 aa).

The short motif at 40 to 45 (SGGKDS) is the PP-loop motif element. Positions 115, 118, and 206 each coordinate [4Fe-4S] cluster.

This sequence belongs to the TtcA family. In terms of assembly, homodimer. Requires Mg(2+) as cofactor. [4Fe-4S] cluster is required as a cofactor.

The protein resides in the cytoplasm. It catalyses the reaction cytidine(32) in tRNA + S-sulfanyl-L-cysteinyl-[cysteine desulfurase] + AH2 + ATP = 2-thiocytidine(32) in tRNA + L-cysteinyl-[cysteine desulfurase] + A + AMP + diphosphate + H(+). It functions in the pathway tRNA modification. Its function is as follows. Catalyzes the ATP-dependent 2-thiolation of cytidine in position 32 of tRNA, to form 2-thiocytidine (s(2)C32). The sulfur atoms are provided by the cysteine/cysteine desulfurase (IscS) system. The chain is tRNA-cytidine(32) 2-sulfurtransferase from Pseudomonas fluorescens (strain SBW25).